The primary structure comprises 517 residues: Crotonobetaine/carnitine--CoA ligase (517 aa).

It belongs to the ATP-dependent AMP-binding enzyme family.

The enzyme catalyses 4-(trimethylamino)butanoate + ATP + CoA = 4-(trimethylamino)butanoyl-CoA + AMP + diphosphate. It catalyses the reaction crotonobetaine + ATP + CoA = crotonobetainyl-CoA + AMP + diphosphate. The catalysed reaction is (R)-carnitine + ATP + CoA = (R)-carnitinyl-CoA + AMP + diphosphate. It participates in amine and polyamine metabolism; carnitine metabolism. Functionally, catalyzes the transfer of CoA to carnitine, generating the initial carnitinyl-CoA needed for the CaiB reaction cycle. Also has activity toward crotonobetaine and gamma-butyrobetaine. The polypeptide is Crotonobetaine/carnitine--CoA ligase (Salmonella enteritidis PT4 (strain P125109)).